The sequence spans 198 residues: Phosphoheptose isomerase (198 aa).

The SIS domain occupies 40-198 (IVTALRSGRK…IEAALMQDLS (159 aa)). A substrate-binding site is contributed by 55 to 57 (NGG). Zn(2+)-binding residues include histidine 64 and glutamate 68. Substrate is bound by residues glutamate 68, 97–98 (ND), 123–125 (STS), serine 128, and glutamine 175. Zn(2+) is bound by residues glutamine 175 and histidine 183.

It belongs to the SIS family. GmhA subfamily. As to quaternary structure, homotetramer. Zn(2+) serves as cofactor.

Its subcellular location is the cytoplasm. The catalysed reaction is 2 D-sedoheptulose 7-phosphate = D-glycero-alpha-D-manno-heptose 7-phosphate + D-glycero-beta-D-manno-heptose 7-phosphate. It participates in carbohydrate biosynthesis; D-glycero-D-manno-heptose 7-phosphate biosynthesis; D-glycero-alpha-D-manno-heptose 7-phosphate and D-glycero-beta-D-manno-heptose 7-phosphate from sedoheptulose 7-phosphate: step 1/1. Catalyzes the isomerization of sedoheptulose 7-phosphate in D-glycero-D-manno-heptose 7-phosphate. This Bradyrhizobium sp. (strain BTAi1 / ATCC BAA-1182) protein is Phosphoheptose isomerase.